The chain runs to 553 residues: Cytokine-like nuclear factor N-PAC (553 aa).

One can recognise a PWWP domain in the interval 8 to 66 (LGDLVWGKLGRYPPWPGKIVNPPKDLKKPRGKKCFFVKFFGTEDHAWIKVEQLKPYHAH). Basic and acidic residues-rich tracts occupy residues 92–145 (RAKG…EGKK) and 162–182 (RAQE…KDLS). The tract at residues 92-190 (RAKGKDQTSS…LSIPESSTVK (99 aa)) is disordered. Ser-130 bears the Phosphoserine mark. Lys-135 is covalently cross-linked (Glycyl lysine isopeptide (Lys-Gly) (interchain with G-Cter in SUMO2)). At Ser-167 the chain carries Phosphoserine. Residues 168 to 180 (PRKRGRPPKDEKD) constitute a DNA-binding region (a.T hook). Glycyl lysine isopeptide (Lys-Gly) (interchain with G-Cter in SUMO2) cross-links involve residues Lys-176, Lys-179, Lys-201, and Lys-211. Positions 214–217 (DPHF) are interaction with histone H3. The tract at residues 216-225 (HFHHFLLSQT) is interaction with KDM1B. Residues Lys-227, Lys-237, Lys-240, and Lys-269 each participate in a glycyl lysine isopeptide (Lys-Gly) (interchain with G-Cter in SUMO2) cross-link. A dehydrogenase domain region spans residues 261-553 (GSVTPTDKKI…MSAVYRAYIH (293 aa)). 271 to 285 (GFLGLGLMGSGIVSN) is a binding site for NAD(+). A Glycyl lysine isopeptide (Lys-Gly) (interchain with G-Cter in SUMO2) cross-link involves residue Lys-302. NAD(+) is bound by residues Thr-362 and Lys-505. At Ser-540 the chain carries Phosphoserine.

This sequence belongs to the HIBADH-related family. NP60 subfamily. In terms of assembly, homotetramere. Interacts with MAPK14. Interacts with KDM1B at nucleosomes; this interaction stimulates H3K4me1 and H3K4me2 demethylation. Binds to mononucleosomes. Interacts with GATA4; the interaction is required for a synergistic activation of GATA4 target genes transcription.

The protein localises to the nucleus. The protein resides in the chromosome. In terms of biological role, cytokine-like nuclear factor with chromatin gene reader activity involved in chromatin modification and regulation of gene expression. Acts as a nucleosome-destabilizing factor that is recruited to genes during transcriptional activation. Recognizes and binds histone H3 without a preference for specific epigenetic markers and also binds DNA. Interacts with KDM1B and promotes its histone demethylase activity by facilitating the capture of H3 tails, they form a multifunctional enzyme complex that modifies transcribed chromatin and facilitates Pol II transcription through nucleosomes. Stimulates the acetylation of 'Lys-56' of nucleosomal histone H3 (H3K56ac) by EP300. With GATA4, co-binds a defined set of heart development genes and coregulates their expression during cardiomyocyte differentiation. Regulates p38 MAP kinase activity by mediating stress activation of MAPK14/p38alpha and specifically regulating MAPK14 signaling. Indirectly promotes phosphorylation of MAPK14 and activation of ATF2. The phosphorylation of MAPK14 requires upstream activity of MAP2K4 and MAP2K6. This is Cytokine-like nuclear factor N-PAC (GLYR1) from Bos taurus (Bovine).